The primary structure comprises 380 residues: Cytochrome b (380 aa).

4 consecutive transmembrane segments (helical) span residues 34–54 (FGSLLAVCLVTQILTGLLLAM), 78–99 (WLIRNLHANGASFFFICIFLHI), 114–134 (WNTGVILLLTLMATAFVGYVL), and 179–199 (FFALHFLLPFVIAGITIIHLT). Positions 84 and 98 each coordinate heme b. Residues histidine 183 and histidine 197 each coordinate heme b. Histidine 202 serves as a coordination point for a ubiquinone. A run of 4 helical transmembrane segments spans residues 227–247 (IKDILGLTLMFIPFLTLALFS), 289–309 (LGGVLALAASVLILLLIPFLH), 321–341 (LSQTLFWLLVANLLILTWIGS), and 348–368 (FIIIGQMASLSYFSILLILFP).

It belongs to the cytochrome b family. The cytochrome bc1 complex contains 11 subunits: 3 respiratory subunits (MT-CYB, CYC1 and UQCRFS1), 2 core proteins (UQCRC1 and UQCRC2) and 6 low-molecular weight proteins (UQCRH/QCR6, UQCRB/QCR7, UQCRQ/QCR8, UQCR10/QCR9, UQCR11/QCR10 and a cleavage product of UQCRFS1). This cytochrome bc1 complex then forms a dimer. Heme b serves as cofactor.

Its subcellular location is the mitochondrion inner membrane. Component of the ubiquinol-cytochrome c reductase complex (complex III or cytochrome b-c1 complex) that is part of the mitochondrial respiratory chain. The b-c1 complex mediates electron transfer from ubiquinol to cytochrome c. Contributes to the generation of a proton gradient across the mitochondrial membrane that is then used for ATP synthesis. The sequence is that of Cytochrome b (MT-CYB) from Alectoris chukar (Chukar partridge).